We begin with the raw amino-acid sequence, 150 residues long: Deoxyuridine 5'-triphosphate nucleotidohydrolase (150 aa).

Residues 69–71 (RSG), asparagine 82, 86–88 (LID), and lysine 96 each bind substrate.

This sequence belongs to the dUTPase family. Mg(2+) is required as a cofactor.

The enzyme catalyses dUTP + H2O = dUMP + diphosphate + H(+). It participates in pyrimidine metabolism; dUMP biosynthesis; dUMP from dCTP (dUTP route): step 2/2. Functionally, this enzyme is involved in nucleotide metabolism: it produces dUMP, the immediate precursor of thymidine nucleotides and it decreases the intracellular concentration of dUTP so that uracil cannot be incorporated into DNA. The polypeptide is Deoxyuridine 5'-triphosphate nucleotidohydrolase (Neisseria gonorrhoeae (strain NCCP11945)).